We begin with the raw amino-acid sequence, 430 residues long: Enolase (430 aa).

Residue Gln168 coordinates (2R)-2-phosphoglycerate. The Proton donor role is filled by Glu210. Asp247, Glu288, and Asp315 together coordinate Mg(2+). The (2R)-2-phosphoglycerate site is built by Lys340, Arg369, Ser370, and Lys391. The active-site Proton acceptor is Lys340.

Belongs to the enolase family. Mg(2+) is required as a cofactor.

Its subcellular location is the cytoplasm. It localises to the secreted. The protein localises to the cell surface. It catalyses the reaction (2R)-2-phosphoglycerate = phosphoenolpyruvate + H2O. It participates in carbohydrate degradation; glycolysis; pyruvate from D-glyceraldehyde 3-phosphate: step 4/5. Functionally, catalyzes the reversible conversion of 2-phosphoglycerate (2-PG) into phosphoenolpyruvate (PEP). It is essential for the degradation of carbohydrates via glycolysis. This chain is Enolase, found in Picosynechococcus sp. (strain ATCC 27264 / PCC 7002 / PR-6) (Agmenellum quadruplicatum).